Consider the following 184-residue polypeptide: Dual-action ribosomal maturation protein DarP (184 aa).

The tract at residues 1–21 is disordered; sequence MYKHPDEEWLDEIPGQQENED.

This sequence belongs to the DarP family.

It localises to the cytoplasm. Its function is as follows. Member of a network of 50S ribosomal subunit biogenesis factors which assembles along the 30S-50S interface, preventing incorrect 23S rRNA structures from forming. Promotes peptidyl transferase center (PTC) maturation. This Edwardsiella ictaluri (strain 93-146) protein is Dual-action ribosomal maturation protein DarP.